We begin with the raw amino-acid sequence, 391 residues long: Mycofactocin maturase MftC (391 aa).

A Radical SAM core domain is found at 16-232 (LDAPICLTWE…KGERVLTGDS (217 aa)). Residues Cys-30, Cys-34, Cys-37, Cys-251, Cys-258, Cys-269, Cys-310, Cys-313, Cys-319, Cys-323, and Cys-341 each coordinate [4Fe-4S] cluster. A disordered region spans residues 340 to 391 (ECVQGHSEPALARERHLPRPRADHSRGRRVSKPVPLTLSMRPPKRPCNESPV). Residues 350–364 (LARERHLPRPRADHS) are compositionally biased toward basic and acidic residues.

It belongs to the radical SAM superfamily. It depends on [4Fe-4S] cluster as a cofactor.

The catalysed reaction is [mycofactocin precursor peptide]-C-terminal glycyl-L-valyl-L-tyrosine + S-adenosyl-L-methionine = [mycofactocin precursor peptide]-C-terminal glycyl-N-{[2-(4-hydroxyphenyl)ethenyl]-3-methylbutanamide} + 5'-deoxyadenosine + L-methionine + CO2. It catalyses the reaction [mycofactocin precursor peptide]-C-terminal glycyl-N-{[2-(4-hydroxyphenyl)ethenyl]-3-methylbutanamide} + AH2 + S-adenosyl-L-methionine = [mycofactocin precursor peptide]-C-terminal glycyl-N-{5-[(4-hydroxyphenyl)methyl]-4,4-dimethyl-2-oxopyrrolidin-3-yl}acetamide + 5'-deoxyadenosine + L-methionine + A + H(+). Its function is as follows. Radical S-adenosylmethionine (SAM) enzyme responsible for the first step of the biosynthesis of the enzyme cofactor mycofactocin (MFT). Catalyzes two reactions at the C-terminus of the mycofactocin precursor (the MftA peptide). The first one is the oxidative decarboxylation of the C-terminal L-tyrosine of MftA, forming an unsaturated tyramine moiety. The second reaction is the cross-linking of the tyramine with the penultimate L-valine residue, forming a five-membered lactam ring. Its activity requires the presence of the MftB chaperone. This Mycobacterium tuberculosis (strain CDC 1551 / Oshkosh) protein is Mycofactocin maturase MftC (mftC).